Here is a 282-residue protein sequence, read N- to C-terminus: 4-diphosphocytidyl-2-C-methyl-D-erythritol kinase (282 aa).

Lys13 is an active-site residue. Position 96 to 106 (96 to 106 (PMGGGIGGGSS)) interacts with ATP. Asp138 is an active-site residue.

It belongs to the GHMP kinase family. IspE subfamily.

It carries out the reaction 4-CDP-2-C-methyl-D-erythritol + ATP = 4-CDP-2-C-methyl-D-erythritol 2-phosphate + ADP + H(+). The protein operates within isoprenoid biosynthesis; isopentenyl diphosphate biosynthesis via DXP pathway; isopentenyl diphosphate from 1-deoxy-D-xylulose 5-phosphate: step 3/6. Catalyzes the phosphorylation of the position 2 hydroxy group of 4-diphosphocytidyl-2C-methyl-D-erythritol. This chain is 4-diphosphocytidyl-2-C-methyl-D-erythritol kinase, found in Pseudomonas syringae pv. tomato (strain ATCC BAA-871 / DC3000).